The sequence spans 425 residues: MAGLDPTLSTSHPFYDVARHGILQVAGDDRQGRRIFTFSCCRLPPLHQLNHQRLLEYLKYTLDQHVENDYTIVYFHYGLSSQNKPSLGWLQNTYKEFDRKYKKNLKALYVVHPTSLIKALWNIFKPLISHKFGKKVTYCSNLRELREHLQCDQLLIPPEVVRYDEKLQNLHKGQPPPPTKTPPPRPPLPTQQFGVSLQYLRDKNQGELIPPVLRWTVTYLREKGLRTEGLFRRSASAQTVRQVQRLYDQGKPVNFDDYGDMHLPAVILKTFLRELPQPLLTFQAYEQILGITSVESSLRVTHCRLILRSLPEHNYAVLRYLMGFLHEVSLESISNKMNSSNLACVFGLNLIWPSQGVASLSALVPLNLFTELLIEYYDKVFSCQEAPGEHTRDTVEVQQAGPVTKEFMKTGTPRASPYLSRLRIS.

The region spanning 13–168 (PFYDVARHGI…EVVRYDEKLQ (156 aa)) is the CRAL-TRIO domain. The interval 169–192 (NLHKGQPPPPTKTPPPRPPLPTQQ) is disordered. Over residues 174–189 (QPPPPTKTPPPRPPLP) the composition is skewed to pro residues. The region spanning 195–381 (VSLQYLRDKN…LLIEYYDKVF (187 aa)) is the Rho-GAP domain.

As to expression, highly expressed in skeletal muscle, lung and testis, and at lower levels in kidney, stomach and colon. Not detected in heart, liver, spleen, breast, brain, neonatal head or pancreas.

GTPase activator for the Rho-type GTPases by converting them to an inactive GDP-bound state. The polypeptide is Rho GTPase-activating protein 8 (Arhgap8) (Mus musculus (Mouse)).